A 221-amino-acid polypeptide reads, in one-letter code: Vesicle transport v-SNARE 11 (221 aa).

The residue at position 2 (S2) is an N-acetylserine. Over 2-198 (SDVFDGYERQ…MTRRMNKNKW (197 aa)) the chain is Cytoplasmic. Residues 32–93 (EQKKQKLSEI…FKTEVKRITS (62 aa)) adopt a coiled-coil conformation. Residues 199–219 (TIGAIIIALIAAIFIILYFKL) traverse the membrane as a helical; Anchor for type IV membrane protein segment. At 220-221 (TK) the chain is on the vesicular side.

It belongs to the VTI1 family. Forms SNARE complexes with the t-SNAREs SYP51 and either SYP21 or SYP22 in the PVC, and with a much lower affinity with SYP61 in the TGN. Does not interact with SYP41, SYP42 or VPS45. Binds to EPSIN1. Interacts with SCYL2B. In terms of tissue distribution, expressed in roots, stems, flowers and leaves.

It is found in the golgi apparatus. It localises to the trans-Golgi network membrane. Its subcellular location is the prevacuolar compartment membrane. The protein resides in the vacuole membrane. In terms of biological role, functions as a v-SNARE responsible for targeting AtELP-containing vesicles from the trans-Golgi network (TGN) to the prevacuolar compartment (PVC) and mediates liposome fusion. May be also involved in retrograde traffic to the cis-Golgi. Promotes the formation of vacuolar membrane 'bulbs'. Necessary to deliver proteins to the lytic vacuole, but seems not involved in storage proteins transport. Required for amyloplast sedimentation in the endodermis during shoot gravitropism, which are thus acting as statoliths. Expression in the endodermis is essential for the shoot gravitropic response, whereas expression in other tissues may be responsible for the correct stem and leaf shape. The sequence is that of Vesicle transport v-SNARE 11 from Arabidopsis thaliana (Mouse-ear cress).